The following is a 257-amino-acid chain: NAD-capped RNA hydrolase NudC (257 aa).

Substrate is bound at residue Arg-69. Zn(2+)-binding residues include Cys-98 and Cys-101. Glu-111 contributes to the substrate binding site. Zn(2+) contacts are provided by Cys-116 and Cys-119. Position 124 (Tyr-124) interacts with substrate. The Nudix hydrolase domain occupies Pro-125–Thr-248. Ala-158, Glu-174, and Glu-178 together coordinate a divalent metal cation. The short motif at Gly-159 to Gly-180 is the Nudix box element. Gln-192–Ser-199 provides a ligand contact to substrate. Glu-219 provides a ligand contact to a divalent metal cation. Ala-241 contributes to the substrate binding site.

This sequence belongs to the Nudix hydrolase family. NudC subfamily. Homodimer. Mg(2+) is required as a cofactor. Requires Mn(2+) as cofactor. The cofactor is Zn(2+).

The enzyme catalyses a 5'-end NAD(+)-phospho-ribonucleoside in mRNA + H2O = a 5'-end phospho-adenosine-phospho-ribonucleoside in mRNA + beta-nicotinamide D-ribonucleotide + 2 H(+). It catalyses the reaction NAD(+) + H2O = beta-nicotinamide D-ribonucleotide + AMP + 2 H(+). It carries out the reaction NADH + H2O = reduced beta-nicotinamide D-ribonucleotide + AMP + 2 H(+). Its function is as follows. mRNA decapping enzyme that specifically removes the nicotinamide adenine dinucleotide (NAD) cap from a subset of mRNAs by hydrolyzing the diphosphate linkage to produce nicotinamide mononucleotide (NMN) and 5' monophosphate mRNA. The NAD-cap is present at the 5'-end of some mRNAs and stabilizes RNA against 5'-processing. Has preference for mRNAs with a 5'-end purine. Catalyzes the hydrolysis of a broad range of dinucleotide pyrophosphates. In Salmonella agona (strain SL483), this protein is NAD-capped RNA hydrolase NudC.